The following is a 274-amino-acid chain: Tryptophan synthase alpha chain (274 aa).

Active-site proton acceptor residues include E49 and D60.

The protein belongs to the TrpA family. In terms of assembly, tetramer of two alpha and two beta chains.

The enzyme catalyses (1S,2R)-1-C-(indol-3-yl)glycerol 3-phosphate + L-serine = D-glyceraldehyde 3-phosphate + L-tryptophan + H2O. The protein operates within amino-acid biosynthesis; L-tryptophan biosynthesis; L-tryptophan from chorismate: step 5/5. In terms of biological role, the alpha subunit is responsible for the aldol cleavage of indoleglycerol phosphate to indole and glyceraldehyde 3-phosphate. This is Tryptophan synthase alpha chain from Zymomonas mobilis subsp. mobilis (strain ATCC 31821 / ZM4 / CP4).